Consider the following 147-residue polypeptide: Large ribosomal subunit protein uL13 (147 aa).

It belongs to the universal ribosomal protein uL13 family. In terms of assembly, part of the 50S ribosomal subunit.

In terms of biological role, this protein is one of the early assembly proteins of the 50S ribosomal subunit, although it is not seen to bind rRNA by itself. It is important during the early stages of 50S assembly. This is Large ribosomal subunit protein uL13 from Leuconostoc citreum (strain KM20).